Here is a 510-residue protein sequence, read N- to C-terminus: NAD(P)H-quinone oxidoreductase subunit 2 B, chloroplastic (510 aa).

A run of 13 helical transmembrane segments spans residues 24-44, 57-77, 99-119, 124-144, 149-169, 183-203, 227-247, 295-315, 323-343, 347-367, 395-415, 418-438, and 482-502; these read LLLF…GLIL, IPWL…ALLF, IFQF…VEYI, MAIT…MFLC, LITI…LSGY, YLLM…WLYG, PGIS…LSPA, WHLL…LIAI, MLAY…IVGD, GYAS…GTFA, ALSL…AGFF, LHLF…IGLL, and LSMI…NPII.

The protein belongs to the complex I subunit 2 family. NDH is composed of at least 16 different subunits, 5 of which are encoded in the nucleus.

The protein resides in the plastid. It localises to the chloroplast thylakoid membrane. The catalysed reaction is a plastoquinone + NADH + (n+1) H(+)(in) = a plastoquinol + NAD(+) + n H(+)(out). It catalyses the reaction a plastoquinone + NADPH + (n+1) H(+)(in) = a plastoquinol + NADP(+) + n H(+)(out). Its function is as follows. NDH shuttles electrons from NAD(P)H:plastoquinone, via FMN and iron-sulfur (Fe-S) centers, to quinones in the photosynthetic chain and possibly in a chloroplast respiratory chain. The immediate electron acceptor for the enzyme in this species is believed to be plastoquinone. Couples the redox reaction to proton translocation, and thus conserves the redox energy in a proton gradient. This chain is NAD(P)H-quinone oxidoreductase subunit 2 B, chloroplastic, found in Cucumis sativus (Cucumber).